Here is a 247-residue protein sequence, read N- to C-terminus: 2,3-bisphosphoglycerate-dependent phosphoglycerate mutase (247 aa).

Substrate-binding positions include 8 to 15, 21 to 22, arginine 60, 87 to 90, lysine 98, 114 to 115, and 183 to 184; these read RHGESQWN, TG, ERHY, RR, and GN. Histidine 9 (tele-phosphohistidine intermediate) is an active-site residue. Glutamate 87 functions as the Proton donor/acceptor in the catalytic mechanism.

It belongs to the phosphoglycerate mutase family. BPG-dependent PGAM subfamily.

It carries out the reaction (2R)-2-phosphoglycerate = (2R)-3-phosphoglycerate. Its pathway is carbohydrate degradation; glycolysis; pyruvate from D-glyceraldehyde 3-phosphate: step 3/5. Catalyzes the interconversion of 2-phosphoglycerate and 3-phosphoglycerate. In Chlorobaculum parvum (strain DSM 263 / NCIMB 8327) (Chlorobium vibrioforme subsp. thiosulfatophilum), this protein is 2,3-bisphosphoglycerate-dependent phosphoglycerate mutase.